The primary structure comprises 326 residues: MDAVLLEHFPGALDTFPSSYFDEEDFFTDQSSRDPLEDGDELLGDEQAEVEFLSHQLHEYCYRDGACLLLQPAPSAAPHALAPPPLGDPGEPEDSGSYCCDAGAPLGAFPYSPGSPPSCLAYPCTAVLSPGTRLRGLNGAAAAAAAAARRRRRVRSEAELQQLRQAANVRERRRMQSINDAFEGLRSHIPTLPYEKRLSKVDTLRLAIGYINFLSELVQADLPLRGSGTGGCGGPGGSRHLGGDSPGNQAQKVIICHRGTRSPSPSDPDYGLPPLAGHSLSWADEKQLKEQNIIRTAKVWTPEDPRKLNSKSFDNIENEPPFEFVS.

A bHLH domain is found at 162-214 (QLRQAANVRERRRMQSINDAFEGLRSHIPTLPYEKRLSKVDTLRLAIGYINFL). Positions 229-240 (TGGCGGPGGSRH) are enriched in gly residues. Disordered regions lie at residues 229 to 249 (TGGC…PGNQ) and 304 to 326 (DPRK…EFVS).

As to quaternary structure, component of the pancreas transcription factor 1 complex (PTF1) which is composed of TCF3/p75, TCF12/p64 and PTF1A/p48. TCF3 is responsible for the nuclear import of the p48/p64 complex. Interacts with TCF3 and RBPSUH/RBP-Jkappa. In terms of tissue distribution, exocrine pancreas-specific. Expressed in azaserine-induced pancreatic tumors (at protein level). Expressed in AR42J cells but not in ARIP, DSL6A, or DSL6B cells. Down-regulation is associated with the change of an azaserine-induced acinar cell carcinoma to a ductal phenotype.

The protein localises to the nucleus. Its subcellular location is the cytoplasm. Functionally, transcription factor implicated in the cell fate determination in various organs. Binds to the E-box consensus sequence 5'-CANNTG-3'. Plays a role in early and late pancreas development and differentiation. Important for determining whether cells allocated to the pancreatic buds continue towards pancreatic organogenesis or revert back to duodenal fates. May be involved in the maintenance of exocrine pancreas-specific gene expression including ELA1 and amylase. Required for the formation of pancreatic acinar and ductal cells. Plays an important role in cerebellar development. Directly regulated by FOXN4 and RORC during retinal development, FOXN4-PTF1A pathway plays a central role in directing the differentiation of retinal progenitors towards horizontal and amacrine fates. The sequence is that of Pancreas transcription factor 1 subunit alpha (Ptf1a) from Rattus norvegicus (Rat).